A 460-amino-acid chain; its full sequence is NADH-ubiquinone oxidoreductase chain 4 (460 aa).

The next 13 helical transmembrane spans lie at 20–42 (SKWL…LTWL), 61–81 (PLST…ILAS), 94–113 (RMYI…AFGA), 114–134 (TKII…LIII), 148–168 (TYFL…LLLL), 195–215 (IWWA…GMHL), 225–245 (PVAG…YGMM), 258–278 (LAYP…LVCL), 285–304 (SLIA…GILI), 308–330 (WGFT…LFCL), 351–371 (MVLP…LALP), 380–400 (LMII…TGMG), and 436–456 (LLMT…ELMW).

Belongs to the complex I subunit 4 family. As to quaternary structure, core subunit of respiratory chain NADH dehydrogenase (Complex I) which is composed of 45 different subunits.

It is found in the mitochondrion inner membrane. The enzyme catalyses a ubiquinone + NADH + 5 H(+)(in) = a ubiquinol + NAD(+) + 4 H(+)(out). In terms of biological role, core subunit of the mitochondrial membrane respiratory chain NADH dehydrogenase (Complex I) which catalyzes electron transfer from NADH through the respiratory chain, using ubiquinone as an electron acceptor. Essential for the catalytic activity and assembly of complex I. This is NADH-ubiquinone oxidoreductase chain 4 (mt-nd4) from Danio rerio (Zebrafish).